An 82-amino-acid polypeptide reads, in one-letter code: MEVRSLNLCFLLVLVLLMSPAPTAVAFSPEDCLDDVGWILICTKPTCKFSCWTSRSVNKGRKMQDYWCSDSNTCHCVFCTGD.

The signal sequence occupies residues 1–26; that stretch reads MEVRSLNLCFLLVLVLLMSPAPTAVA. Intrachain disulfides connect Cys32/Cys79, Cys42/Cys68, Cys47/Cys74, and Cys51/Cys76.

The protein belongs to the DEFL family.

The protein localises to the secreted. This Arabidopsis thaliana (Mouse-ear cress) protein is Putative defensin-like protein 134.